A 443-amino-acid polypeptide reads, in one-letter code: Thymidine phosphorylase (443 aa).

Belongs to the thymidine/pyrimidine-nucleoside phosphorylase family. In terms of assembly, homodimer.

It catalyses the reaction thymidine + phosphate = 2-deoxy-alpha-D-ribose 1-phosphate + thymine. The protein operates within pyrimidine metabolism; dTMP biosynthesis via salvage pathway; dTMP from thymine: step 1/2. The enzymes which catalyze the reversible phosphorolysis of pyrimidine nucleosides are involved in the degradation of these compounds and in their utilization as carbon and energy sources, or in the rescue of pyrimidine bases for nucleotide synthesis. The polypeptide is Thymidine phosphorylase (Shewanella piezotolerans (strain WP3 / JCM 13877)).